We begin with the raw amino-acid sequence, 957 residues long: AP2-associated protein kinase 1 (957 aa).

Met1 bears the N-acetylmethionine mark. Over residues 1 to 11 (MKKFFDSRREQ) the composition is skewed to basic and acidic residues. Positions 1-25 (MKKFFDSRREQGGSGLGSGSSGGGG) are disordered. Residues 12-25 (GGSGLGSGSSGGGG) are compositionally biased toward gly residues. Ser14 is subject to Phosphoserine. The Protein kinase domain maps to 46-315 (VTVDEVLAEG…QVSYFSFKLL (270 aa)). ATP is bound by residues 52–60 (LAEGGFAIV) and Lys74. Asp176 serves as the catalytic Proton acceptor. Tyr234 is modified (phosphotyrosine). Ser235 carries the phosphoserine modification. 2 disordered regions span residues 326-506 (NSPI…AVHP) and 563-629 (TAAA…AGHR). Thr354 and Thr389 each carry phosphothreonine. Arg391 bears the Omega-N-methylarginine mark. Pro residues predominate over residues 436 to 448 (PQAPPTSQQPPSA). Thr441 carries the phosphothreonine modification. Low complexity-rich tracts occupy residues 449 to 506 (PAQA…AVHP) and 563 to 601 (TAAAAPQPQAQPAAAASPAPAQEPAQIQAPVRQQPKVQT). Thr602 carries the post-translational modification Phosphothreonine. Positions 607-617 (IQGQKLGSLTP) are enriched in polar residues. Ser614 bears the Phosphoserine mark. Thr616 is subject to Phosphothreonine. Residues Ser619, Ser620, Ser633, and Ser646 each carry the phosphoserine modification. A Phosphothreonine modification is found at Thr649. Positions 660 to 697 (SLNKSKSATTTPSGSPRASQQNVYNPSEGSTWNPFDDD) are disordered. Polar residues predominate over residues 668–692 (TTTPSGSPRASQQNVYNPSEGSTWN). Tyr683 is modified (phosphotyrosine). Residues Ser727, Ser842, Ser933, and Ser934 each carry the phosphoserine modification. A clathrin-binding domain (CBD) region spans residues 819-956 (EKADVAVESL…SLLLVDQLID (138 aa)). Disordered stretches follow at residues 832-855 (LEPPVPQRLPSQTESVTSNRTDSL) and 919-941 (VLITKNPQGGHSRNSSGSSESSL). Over residues 840–855 (LPSQTESVTSNRTDSL) the composition is skewed to polar residues. A compositionally biased stretch (low complexity) spans 927–940 (GGHSRNSSGSSESS).

This sequence belongs to the protein kinase superfamily. Ser/Thr protein kinase family. In terms of assembly, interacts (via CBD domain) with clathrin. Interacts with AP-2 complex. Interacts with NUMB. Interacts with alpha-adaptin. Interacts with EPS15 isoform 2. Interacts with membrane-bound activated NOTCH1 but not with the inactive full-length form of NOTCH1. Preferentially interacts with monoubiquitinated activated NOTCH1 compared to the non-ubiquitinated form. Autophosphorylated. Detected in brain (at protein level).

The protein resides in the cell membrane. It localises to the membrane. Its subcellular location is the clathrin-coated pit. The protein localises to the presynapse. It catalyses the reaction L-seryl-[protein] + ATP = O-phospho-L-seryl-[protein] + ADP + H(+). It carries out the reaction L-threonyl-[protein] + ATP = O-phospho-L-threonyl-[protein] + ADP + H(+). Its activity is regulated as follows. Stimulated by clathrin. Functionally, regulates clathrin-mediated endocytosis by phosphorylating the AP2M1/mu2 subunit of the adaptor protein complex 2 (AP-2) which ensures high affinity binding of AP-2 to cargo membrane proteins during the initial stages of endocytosis. Preferentially, may phosphorylate substrates on threonine residues. Regulates phosphorylation of other AP-2 subunits as well as AP-2 localization and AP-2-mediated internalization of ligand complexes. Phosphorylates NUMB and regulates its cellular localization, promoting NUMB localization to endosomes. Binds to and stabilizes the activated form of NOTCH1, increases its localization in endosomes and regulates its transcriptional activity. This is AP2-associated protein kinase 1 (AAK1) from Bos taurus (Bovine).